We begin with the raw amino-acid sequence, 645 residues long: Iron-regulated surface determinant protein B (645 aa).

The first 40 residues, 1 to 40 (MNKQQKEFKSFYSIRKSSLGVASVAISTLLLLMSNGEAQA), serve as a signal peptide directing secretion. The YSIRK-G/S signaling motif signature appears at 12–23 (YSIRKSSLGVAS). A compositionally biased stretch (low complexity) spans 38–53 (AQAAAEETGGTNTEAQ). Residues 38–113 (AQAAAEETGG…APKETKAVKP (76 aa)) are disordered. Basic and acidic residues predominate over residues 84-110 (KEVEAPTSETKEAKEVKEVKAPKETKA). NEAT domains are found at residues 144–269 (SAPN…KFKT) and 341–458 (KMTD…TKAN). Residues M362 and Y440 each contribute to the heme site. 2 stretches are compositionally biased toward basic and acidic residues: residues 458-476 (NTDK…KKEA) and 489-534 (VEKE…KGEV). Residues 458-619 (NTDKSNKKEQ…LPQTGEESNK (162 aa)) are disordered. Residues 535-560 (ESSSTTPTKVVSTTQNVAKPTTASSK) are compositionally biased toward low complexity. A compositionally biased stretch (polar residues) spans 585–615 (NIKNTNDGHTQSQNNKNTQENKAKSLPQTGE). Residues 610–614 (LPQTG) carry the LPXTG sorting signal motif. The residue at position 613 (T613) is a Pentaglycyl murein peptidoglycan amidated threonine. A propeptide spans 614-645 (GEESNKDMTLPLMALLALSSIVAFVLPRKRKN) (removed by sortase).

It belongs to the IsdB family. In terms of assembly, interacts with host HBA; this interaction allows heme extraction as iron source. Interacts with IsdA.

It is found in the secreted. The protein resides in the cell wall. Functionally, cell wall-anchored surface receptor that extracts heme from oxidized metHb to enable growth on hemoglobin as a sole iron source. Rapidly extracts heme from hemoglobin and transfers it to IsdA or IsdC, which then relays it to the membrane transporter/IsdEF for internalization. Also promotes resistance to hydrogen peroxide and killing by neutrophils. This Staphylococcus aureus (strain Mu3 / ATCC 700698) protein is Iron-regulated surface determinant protein B (isdB).